A 399-amino-acid polypeptide reads, in one-letter code: Unsaturated chondroitin disaccharide hydrolase (399 aa).

D116 functions as the Nucleophile in the catalytic mechanism. Positions 116, 176, 234, 236, 248, 252, 366, and 369 each coordinate substrate. D176 functions as the Proton donor in the catalytic mechanism.

Belongs to the glycosyl hydrolase 88 family. In terms of assembly, monomer.

The enzyme catalyses beta-D-4-deoxy-Delta(4)-GlcpA-(1-&gt;3)-beta-D-GalpNAc6S + H2O = N-acetyl-beta-D-galactosamine 6-sulfate + 5-dehydro-4-deoxy-D-glucuronate. Catalyzes the hydrolysis of unsaturated hyaluronate and chondroitin disaccharides. Also degrades unsaturated heparin disaccharides. Releases 4-deoxy-4,5-didehydro D-glucuronic acid or 4-deoxy-4,5-didehydro L-iduronic acid from chondroitin disaccharides, hyaluronan disaccharides and heparin disaccharides and cleaves both glycosidic (1-&gt;3) and (1-&gt;4) bonds. Prefers sulfated glycosaminoglycans compared to unsulfated glycosaminoglycans. Probably required for mammalian cells invasion through the degradation of extracellular sulfated glycosaminoglycans such as chondroitin and hyaluronan. In Streptococcus pyogenes serotype M1, this protein is Unsaturated chondroitin disaccharide hydrolase (ugl).